Consider the following 58-residue polypeptide: Large ribosomal subunit protein eL24 (58 aa).

Zn(2+)-binding residues include Cys6, Cys9, Cys32, and Cys36. Residues 6–36 form a C4-type zinc finger; the sequence is CSFCGAEIPPGYGIMYVRNDGTIQRYCSRKC.

Belongs to the eukaryotic ribosomal protein eL24 family. As to quaternary structure, part of the 50S ribosomal subunit. Forms a cluster with proteins L3 and L14. Requires Zn(2+) as cofactor.

Its function is as follows. Binds to the 23S rRNA. This chain is Large ribosomal subunit protein eL24, found in Pyrobaculum neutrophilum (strain DSM 2338 / JCM 9278 / NBRC 100436 / V24Sta) (Thermoproteus neutrophilus).